The primary structure comprises 205 residues: Small ribosomal subunit protein uS4 (205 aa).

Positions 94–154 constitute an S4 RNA-binding domain; it reads SRLDNSVYRA…TRKDGKIRKN (61 aa).

Belongs to the universal ribosomal protein uS4 family. In terms of assembly, part of the 30S ribosomal subunit. Contacts protein S5. The interaction surface between S4 and S5 is involved in control of translational fidelity.

In terms of biological role, one of the primary rRNA binding proteins, it binds directly to 16S rRNA where it nucleates assembly of the body of the 30S subunit. Its function is as follows. With S5 and S12 plays an important role in translational accuracy. This Mesomycoplasma hyopneumoniae (strain 232) (Mycoplasma hyopneumoniae) protein is Small ribosomal subunit protein uS4.